A 485-amino-acid chain; its full sequence is Aspartyl/glutamyl-tRNA(Asn/Gln) amidotransferase subunit B (485 aa).

Belongs to the GatB/GatE family. GatB subfamily. Heterotrimer of A, B and C subunits.

The catalysed reaction is L-glutamyl-tRNA(Gln) + L-glutamine + ATP + H2O = L-glutaminyl-tRNA(Gln) + L-glutamate + ADP + phosphate + H(+). It catalyses the reaction L-aspartyl-tRNA(Asn) + L-glutamine + ATP + H2O = L-asparaginyl-tRNA(Asn) + L-glutamate + ADP + phosphate + 2 H(+). Its function is as follows. Allows the formation of correctly charged Asn-tRNA(Asn) or Gln-tRNA(Gln) through the transamidation of misacylated Asp-tRNA(Asn) or Glu-tRNA(Gln) in organisms which lack either or both of asparaginyl-tRNA or glutaminyl-tRNA synthetases. The reaction takes place in the presence of glutamine and ATP through an activated phospho-Asp-tRNA(Asn) or phospho-Glu-tRNA(Gln). This chain is Aspartyl/glutamyl-tRNA(Asn/Gln) amidotransferase subunit B, found in Bordetella petrii (strain ATCC BAA-461 / DSM 12804 / CCUG 43448).